The primary structure comprises 253 residues: Ribosome-inactivating protein saporin-7 (253 aa).

E176 is an active-site residue.

It belongs to the ribosome-inactivating protein family. Type 1 RIP subfamily.

It catalyses the reaction Endohydrolysis of the N-glycosidic bond at one specific adenosine on the 28S rRNA.. In terms of biological role, ribosome-inactivating protein of type 1, inhibits protein synthesis in animal cells. In Saponaria officinalis (Common soapwort), this protein is Ribosome-inactivating protein saporin-7 (SAP7).